Consider the following 490-residue polypeptide: Glutamyl-tRNA(Gln) amidotransferase subunit A (490 aa).

Active-site charge relay system residues include K80 and S155. Residue S179 is the Acyl-ester intermediate of the active site.

Belongs to the amidase family. GatA subfamily. In terms of assembly, heterotrimer of A, B and C subunits.

It catalyses the reaction L-glutamyl-tRNA(Gln) + L-glutamine + ATP + H2O = L-glutaminyl-tRNA(Gln) + L-glutamate + ADP + phosphate + H(+). Allows the formation of correctly charged Gln-tRNA(Gln) through the transamidation of misacylated Glu-tRNA(Gln) in organisms which lack glutaminyl-tRNA synthetase. The reaction takes place in the presence of glutamine and ATP through an activated gamma-phospho-Glu-tRNA(Gln). The polypeptide is Glutamyl-tRNA(Gln) amidotransferase subunit A (Brevibacillus brevis (strain 47 / JCM 6285 / NBRC 100599)).